Consider the following 401-residue polypeptide: MSKLVLILNCGSSSLKFAILDPATGEEKLSGLAEAFFLPEARIKWKLNGEKGNADLGAGAAHTEALNFIASNILNDELKNSIAAIGHRIVHGGEKYTQSVIVTDEVVKGIEDAAQFAPLHNPAHLIGIREAFKAFPHLKDKNVVVFDTAFHQTMPEEAFLYALPYSLYKEHGVRRYGAHGTSHYFVSREVAEYVGKPADQVNAIICHLGNGGSVSVVRNGQCIDTSMGLTPLEGLVMGTRCGDIDPAIVFYLYKTLGMSMDQIEETLVKKSGLLGLTEVTSDCRYAEDNYDDESKPETKRALNVYSYRLAKYIGAYMAVLGDDHLDAIAFTGGIGENSAHVRELALNHLKLFGIKIDHERNLATRFGKDGVITTDDSAFKAIVLPTNEELVIAQDTAKLCF.

Asn-9 contributes to the Mg(2+) binding site. Position 16 (Lys-16) interacts with ATP. Residue Arg-88 participates in substrate binding. The active-site Proton donor/acceptor is Asp-147. ATP-binding positions include 207–211, 282–284, and 333–337; these read HLGNG, DCR, and GIGEN. Glu-388 provides a ligand contact to Mg(2+).

This sequence belongs to the acetokinase family. In terms of assembly, homodimer. The cofactor is Mg(2+). It depends on Mn(2+) as a cofactor.

The protein localises to the cytoplasm. The enzyme catalyses acetate + ATP = acetyl phosphate + ADP. The protein operates within metabolic intermediate biosynthesis; acetyl-CoA biosynthesis; acetyl-CoA from acetate: step 1/2. Its function is as follows. Catalyzes the formation of acetyl phosphate from acetate and ATP. Can also catalyze the reverse reaction. This is Acetate kinase from Haemophilus influenzae (strain PittGG).